Here is a 258-residue protein sequence, read N- to C-terminus: Deoxyribose-phosphate aldolase (258 aa).

Residue aspartate 102 is the Proton donor/acceptor of the active site. The active-site Schiff-base intermediate with acetaldehyde is the lysine 165. Lysine 199 serves as the catalytic Proton donor/acceptor.

This sequence belongs to the DeoC/FbaB aldolase family. DeoC type 2 subfamily.

It is found in the cytoplasm. The enzyme catalyses 2-deoxy-D-ribose 5-phosphate = D-glyceraldehyde 3-phosphate + acetaldehyde. The protein operates within carbohydrate degradation; 2-deoxy-D-ribose 1-phosphate degradation; D-glyceraldehyde 3-phosphate and acetaldehyde from 2-deoxy-alpha-D-ribose 1-phosphate: step 2/2. Its function is as follows. Catalyzes a reversible aldol reaction between acetaldehyde and D-glyceraldehyde 3-phosphate to generate 2-deoxy-D-ribose 5-phosphate. The chain is Deoxyribose-phosphate aldolase from Aliivibrio fischeri (strain MJ11) (Vibrio fischeri).